The chain runs to 649 residues: Acetyl-coenzyme A synthetase (649 aa).

CoA contacts are provided by residues 189–192, T311, and N335; that span reads RGGK. ATP contacts are provided by residues 387–389, 411–416, D500, and R515; these read GEP and DTWWQT. Residue S523 coordinates CoA. Residue R526 participates in ATP binding. Mg(2+) is bound by residues V537, H539, and V542. Residue R584 participates in CoA binding. Residue K609 is modified to N6-acetyllysine.

This sequence belongs to the ATP-dependent AMP-binding enzyme family. It depends on Mg(2+) as a cofactor. Post-translationally, acetylated. Deacetylation by the SIR2-homolog deacetylase activates the enzyme.

It carries out the reaction acetate + ATP + CoA = acetyl-CoA + AMP + diphosphate. In terms of biological role, catalyzes the conversion of acetate into acetyl-CoA (AcCoA), an essential intermediate at the junction of anabolic and catabolic pathways. AcsA undergoes a two-step reaction. In the first half reaction, AcsA combines acetate with ATP to form acetyl-adenylate (AcAMP) intermediate. In the second half reaction, it can then transfer the acetyl group from AcAMP to the sulfhydryl group of CoA, forming the product AcCoA. This chain is Acetyl-coenzyme A synthetase, found in Sinorhizobium fredii (strain NBRC 101917 / NGR234).